A 356-amino-acid polypeptide reads, in one-letter code: Tyrosine recombinase XerS (356 aa).

The Core-binding (CB) domain occupies 16 to 121 (TMPWYILEYY…ALSSLYKYLT (106 aa)). The 186-residue stretch at 169–354 (EFLQYIDREY…VNDEQKNALN (186 aa)) folds into the Tyr recombinase domain. Catalysis depends on residues Arg-210, Lys-234, His-306, Arg-309, and His-332. Tyr-341 (O-(3'-phospho-DNA)-tyrosine intermediate) is an active-site residue.

The protein belongs to the 'phage' integrase family. XerS subfamily.

It is found in the cytoplasm. With respect to regulation, ftsK is required for recombination. Its function is as follows. Site-specific tyrosine recombinase, which acts by catalyzing the cutting and rejoining of the recombining DNA molecules. Essential to convert dimers of the bacterial chromosome into monomers to permit their segregation at cell division. This is Tyrosine recombinase XerS from Streptococcus gordonii (strain Challis / ATCC 35105 / BCRC 15272 / CH1 / DL1 / V288).